Consider the following 217-residue polypeptide: Insulin-like growth factor 2.S (217 aa).

Residues M1–A56 form the signal peptide. The segment at Y57 to F83 is b. Disulfide bonds link C64–C103, C76–C116, and C102–C107. The segment at S84–R96 is c. Positions G97–A117 are a. The tract at residues K118–E123 is d. Positions R124–N217 are cleaved as a propeptide — e peptide.

This sequence belongs to the insulin family.

It localises to the secreted. The insulin-like growth factors, isolated from plasma, are structurally and functionally related to insulin but have a much higher growth-promoting activity. Promotes anterior neural development. Acts as a ligand for integrin which is required for IGF2 signaling. In Xenopus laevis (African clawed frog), this protein is Insulin-like growth factor 2.S.